Here is a 78-residue protein sequence, read N- to C-terminus: Probable Fe(2+)-trafficking protein (78 aa).

It belongs to the Fe(2+)-trafficking protein family. As to quaternary structure, monomer.

Could be a mediator in iron transactions between iron acquisition and iron-requiring processes, such as synthesis and/or repair of Fe-S clusters in biosynthetic enzymes. This Buchnera aphidicola subsp. Schizaphis graminum (strain Sg) protein is Probable Fe(2+)-trafficking protein.